A 50-amino-acid chain; its full sequence is Large ribosomal subunit protein bL32c (50 aa).

The protein belongs to the bacterial ribosomal protein bL32 family.

It localises to the plastid. Its subcellular location is the chloroplast. This chain is Large ribosomal subunit protein bL32c, found in Lotus japonicus (Lotus corniculatus var. japonicus).